The sequence spans 551 residues: RCC1 and BTB domain-containing protein 2 (551 aa).

RCC1 repeat units follow at residues 64–115 (NDEI…VLAT), 117–169 (DGEV…VLTS), 171–222 (GEVF…AVVD), 223–274 (TGEV…VLTD), 276–326 (GQIY…AAKT), and 328–382 (GGHV…TVAE). A BTB domain is found at 394 to 457 (ADLKFLVDGK…LYTDNISLSP (64 aa)).

As to expression, expressed in testis and heart (at protein level).

Its subcellular location is the cytoplasmic vesicle. It is found in the secretory vesicle. The protein resides in the acrosome. The polypeptide is RCC1 and BTB domain-containing protein 2 (Rcbtb2) (Mus musculus (Mouse)).